Here is a 441-residue protein sequence, read N- to C-terminus: Glutamyl-tRNA reductase (441 aa).

Substrate-binding positions include Thr-49–Arg-52, Ser-109, Glu-114–Gln-116, and Gln-120. Catalysis depends on Cys-50, which acts as the Nucleophile. Gly-198–Ser-203 lines the NADP(+) pocket.

This sequence belongs to the glutamyl-tRNA reductase family. As to quaternary structure, homodimer.

It carries out the reaction (S)-4-amino-5-oxopentanoate + tRNA(Glu) + NADP(+) = L-glutamyl-tRNA(Glu) + NADPH + H(+). The protein operates within porphyrin-containing compound metabolism; protoporphyrin-IX biosynthesis; 5-aminolevulinate from L-glutamyl-tRNA(Glu): step 1/2. It participates in porphyrin-containing compound metabolism; chlorophyll biosynthesis. Catalyzes the NADPH-dependent reduction of glutamyl-tRNA(Glu) to glutamate 1-semialdehyde (GSA). The protein is Glutamyl-tRNA reductase of Prochlorococcus marinus (strain NATL1A).